Reading from the N-terminus, the 537-residue chain is Tripeptidyl aminopeptidase (537 aa).

The first 36 residues, 1–36, serve as a signal peptide directing secretion; sequence MRKSSIRRRATAFGTAGALVTATLIAGAVSAPAASA. A propeptide spanning residues 37 to 39 is cleaved from the precursor; that stretch reads APA. The 379-residue stretch at 119 to 497 folds into the AB hydrolase-1 domain; the sequence is GALIYNPGGP…SRLITERDAG (379 aa). The active-site Nucleophile is Ser245. Residue Asp470 is part of the active site. His499 acts as the Proton donor in catalysis.

The protein belongs to the peptidase S33 family.

Its subcellular location is the secreted. Cleaves tripeptides from the N-termini of proteins. Does not cleave mono- or dipeptides, or N-terminally blocked peptides. The protein is Tripeptidyl aminopeptidase of Streptomyces lividans.